Here is a 427-residue protein sequence, read N- to C-terminus: MASFNVPIIMDNGTGYSKLGYAGNDAPSYVFPTVIATRSAGASSGPAVSSKPSYMASKGSGHLSSKRATEDLDFFIGNDALKKASAGYSLDYPIRHGQIENWDHMERFWQQSLFKYLRCEPEDHYFLLTEPPLNPPENRENTAEIMFESFNCAGLYIAVQAVLALAASWTSSKVTDRSLTGTVVDSGDGVTHIIPVAEGYVIGSSIKTMPLAGRDVTYFVQSLLRDRNEPDSSLKTAERIKEECCYVCPDIVKEFSRFDREPDRYLKYASESITGHSTTIDVGFERFLAPEIFFNPEIASSDFLTPLPELVDNVVQSSPIDVRKGLYKNIVLSGGSTLFKNFGNRLQRDLKRIVDERIHRSEMLSGAKSGGVDVNVISHKRQRNAVWFGGSLLAQTPEFGSYCHTKADYEEYGASIARRYQIFGNSL.

Belongs to the actin family. ARP3 subfamily. In terms of assembly, component of the Arp2/3 complex composed of arp2, act2, arc1/p41-ARC, arc2/p34-ARC, arc3/p21-ARC, arc4/p20-ARC and arc5/p16-ARC.

The protein resides in the cytoplasm. It is found in the cytoskeleton. Its subcellular location is the actin patch. Functions as ATP-binding component of the Arp2/3 complex which is involved in regulation of actin polymerization and together with an activating nucleation-promoting factor (NPF) mediates the formation of branched actin networks. Seems to contact the pointed end of the daughter actin filament. May be involved in cytokinesis. This chain is Actin-related protein 3 (act2), found in Schizosaccharomyces pombe (strain 972 / ATCC 24843) (Fission yeast).